The chain runs to 352 residues: NAD(P)H pyrophosphatase NUDT13, mitochondrial (352 aa).

Residues 1–20 (MSLYCRTFFRRKSFGCYRLL) constitute a mitochondrion transit peptide. Residues 196–323 (PQMAPVVITL…SLALQPSEAS (128 aa)) form the Nudix hydrolase domain. The Nudix box motif lies at 216 to 240 (RQSSFPKGLYSALAGFCDIGESVEE).

This sequence belongs to the Nudix hydrolase family. Requires Mg(2+) as cofactor. Mn(2+) serves as cofactor.

The protein resides in the mitochondrion. The enzyme catalyses NADH + H2O = reduced beta-nicotinamide D-ribonucleotide + AMP + 2 H(+). The catalysed reaction is NAD(+) + H2O = beta-nicotinamide D-ribonucleotide + AMP + 2 H(+). It carries out the reaction NADPH + H2O = reduced beta-nicotinamide D-ribonucleotide + adenosine 2',5'-bisphosphate + 2 H(+). Functionally, NAD(P)H pyrophosphatase that hydrolyzes NADH into NMNH and AMP, and NADPH into NMNH and 2',5'-ADP. Has a marked preference for the reduced pyridine nucleotides. Does not show activity toward NAD-capped RNAs; the NAD-cap is an atypical cap present at the 5'-end of some RNAs. This Mus musculus (Mouse) protein is NAD(P)H pyrophosphatase NUDT13, mitochondrial.